We begin with the raw amino-acid sequence, 305 residues long: Homoserine kinase (305 aa).

ATP is bound at residue 93–103 (PLARGLGSSAT).

It belongs to the GHMP kinase family. Homoserine kinase subfamily.

The protein localises to the cytoplasm. It carries out the reaction L-homoserine + ATP = O-phospho-L-homoserine + ADP + H(+). Its pathway is amino-acid biosynthesis; L-threonine biosynthesis; L-threonine from L-aspartate: step 4/5. In terms of biological role, catalyzes the ATP-dependent phosphorylation of L-homoserine to L-homoserine phosphate. In Trichodesmium erythraeum (strain IMS101), this protein is Homoserine kinase.